The chain runs to 280 residues: 4-deoxy-L-threo-5-hexosulose-uronate ketol-isomerase (280 aa).

Residues His198, His200, Glu205, and His247 each coordinate Zn(2+).

It belongs to the KduI family. Requires Zn(2+) as cofactor.

It catalyses the reaction 5-dehydro-4-deoxy-D-glucuronate = 3-deoxy-D-glycero-2,5-hexodiulosonate. It functions in the pathway glycan metabolism; pectin degradation; 2-dehydro-3-deoxy-D-gluconate from pectin: step 4/5. Its function is as follows. Catalyzes the isomerization of 5-dehydro-4-deoxy-D-glucuronate to 3-deoxy-D-glycero-2,5-hexodiulosonate. The chain is 4-deoxy-L-threo-5-hexosulose-uronate ketol-isomerase from Bacteroides fragilis (strain YCH46).